We begin with the raw amino-acid sequence, 67 residues long: Large ribosomal subunit protein bL35 (67 aa).

The segment covering 1–16 has biased composition (basic residues); that stretch reads MPKMKTKSGAKKRFRV. Residues 1 to 24 are disordered; sequence MPKMKTKSGAKKRFRVRPGGTVKR.

It belongs to the bacterial ribosomal protein bL35 family.

In Polaromonas naphthalenivorans (strain CJ2), this protein is Large ribosomal subunit protein bL35.